Reading from the N-terminus, the 502-residue chain is Neuronal acetylcholine receptor subunit alpha-7 (502 aa).

The signal sequence occupies residues 1-22; the sequence is MCGRRGGIWLALAAALLHVSLQ. Residues 23–233 lie on the Extracellular side of the membrane; that stretch reads GEFQRRLYKE…VTMRRRTLYY (211 aa). Residues Arg-42 and Val-44 each coordinate Ca(2+). Residues Asn-46, Asn-90, and Asn-133 are each glycosylated (N-linked (GlcNAc...) asparagine). Residues Cys-150 and Cys-164 are joined by a disulfide bond. 2 residues coordinate Ca(2+): Ser-172 and Tyr-210. Cys-212 and Cys-213 are oxidised to a cystine. 3 helical membrane-spanning segments follow: residues 234–254, 262–282, and 295–315; these read GLNLLIPCVLISALALLVFLL, ISLGITVLLSLTVFMLLVAEI, and QYFASTMIIVGLSVVVTVIVL. The interval 260-267 is essential for TMEM35A/NACHO-mediated proper subunit assembly and trafficking to cell membrane; it reads EKISLGIT. Topologically, residues 316–469 are cytoplasmic; it reads RYHHHDPDGG…WKFAACVVDR (154 aa). A helical membrane pass occupies residues 470-490; that stretch reads LCLMAFSVFTIICTIGILMSA.

Belongs to the ligand-gated ion channel (TC 1.A.9) family. Acetylcholine receptor (TC 1.A.9.1) subfamily. Alpha-7/CHRNA7 sub-subfamily. As to quaternary structure, homopentamer. Can also form heteropentamers with CHRNB2, mainly found in basal forebrain cholinergic neurons. Interacts with RIC3; which is required for proper folding and assembly. Interacts with LYPD6. Interacts with CANX. In terms of processing, glycosylations at Asn-46, Asn-90 and Asn-133 are essential for TMEM35A/NACHO-mediated proper subunit assembly and trafficking to the cell membrane. As to expression, higly expressed in brain. ALso expressed in immune cells sucha as macrophages.

It localises to the postsynaptic cell membrane. It is found in the cell membrane. The enzyme catalyses K(+)(in) = K(+)(out). It catalyses the reaction Na(+)(in) = Na(+)(out). The catalysed reaction is Ca(2+)(in) = Ca(2+)(out). It carries out the reaction choline(out) = choline(in). The enzyme catalyses NH4(+)(in) = NH4(+)(out). It catalyses the reaction L-arginine(in) = L-arginine(out). The catalysed reaction is guanidine(out) = guanidine(in). Activated by a myriad of ligands such as acetylcholine, cytisine, nicotine, choline and epibatidine. Oligomeric amyloid-beta protein 42 activates specifially CHRNA7:CHRNB2 nAchRs. Activity is modulated by positive allosteric modulators (PAMs), such as flavonoids, with a wide range of chemical diversity, pharmacological sensitivity and efficacy. AChR activity is inhibited by the antagonists alpha-conotoxons RgIA, ImI and ImII, small disulfide-constrained peptides from cone snails. Functionally, component of neuronal acetylcholine receptors (nAChRs) that function as pentameric, ligand-gated cation channels with high calcium permeability among other activities. nAChRs are excitatory neurotrasnmitter receptors formed by a collection of nAChR subunits known to mediate synaptic transmission in the nervous system and the neuromuscular junction. Each nAchR subunit confers differential attributes to channel properties, including activation, deactivation and desensitization kinetics, pH sensitivity, cation permeability, and binding to allosteric modulators. CHRNA7 forms homopentameric neuronal acetylcholine receptors abundantly expressed in the central nervous system, characterized by fast desensitization and high calcium permeability. Also forms heteropentamers with CHRNB2, mainly expressed in basal forebrain cholinergic neurons. Involved in the modulation of calcium-dependent signaling pathways and influences the release of neurotransmitters, including dopamine, glutamate and GABA. Involved in the modulation of calcium-dependent signaling pathways and influences the release of neurotransmitters, including dopamine, glutamate and GABA. Also expressed in non-neuronal cells such as immune cells like lymphocytes, monocytes and macrophages. In T cells, activation induces metabotropic signaling that results in an increase of intracellular Ca2+ concentrations, independent of ionotropic receptor functions. In macrophages, required for acetylcholine-mediated inhibition of TNF and other inflammatory cytokine release. Once activated by acetylcholine, nicotine or other agonists, selectively inhibits production of pro-inflammatory cytokines while leaving anti-inflammatory cytokines undisturbed. Stimulates the cholinergic anti-inflammatory pathway, controlling inflammation by inhibiting NFKB nuclear translocation and activating the JAK2-STAT3 pathway, independently of ion channel activity. Also expressed in the urothelium where it modulates reflex bladder activity by increasing intracellular calcium through internal stores and decreasing basal ATP release. The polypeptide is Neuronal acetylcholine receptor subunit alpha-7 (Chrna7) (Mus musculus (Mouse)).